We begin with the raw amino-acid sequence, 272 residues long: Phosphonates import ATP-binding protein PhnC (272 aa).

The region spanning 2–246 (LELQRLTKTY…VLATIYGAED (245 aa)) is the ABC transporter domain. 35 to 42 (GPSGAGKS) is an ATP binding site. Positions 248–272 (ASSGREPAPEREPEDTERHLAEVGR) are disordered. A compositionally biased stretch (basic and acidic residues) spans 254–272 (PAPEREPEDTERHLAEVGR).

It belongs to the ABC transporter superfamily. Phosphonates importer (TC 3.A.1.9.1) family. As to quaternary structure, the complex is composed of two ATP-binding proteins (PhnC), two transmembrane proteins (PhnE) and a solute-binding protein (PhnD).

Its subcellular location is the cell inner membrane. It catalyses the reaction phosphonate(out) + ATP + H2O = phosphonate(in) + ADP + phosphate + H(+). Its function is as follows. Part of the ABC transporter complex PhnCDE involved in phosphonates import. Responsible for energy coupling to the transport system. The polypeptide is Phosphonates import ATP-binding protein PhnC (Chromohalobacter salexigens (strain ATCC BAA-138 / DSM 3043 / CIP 106854 / NCIMB 13768 / 1H11)).